We begin with the raw amino-acid sequence, 92 residues long: DNA/RNA-binding protein Alba (92 aa).

Lys-11 is subject to N6-acetyllysine.

Belongs to the histone-like Alba family. Acetylated. Acetylation at Lys-11 decreases DNA-binding affinity.

Its subcellular location is the cytoplasm. It localises to the chromosome. In terms of biological role, binds double-stranded DNA tightly but without sequence specificity. Involved in DNA compaction. In Pyrobaculum islandicum (strain DSM 4184 / JCM 9189 / GEO3), this protein is DNA/RNA-binding protein Alba.